Reading from the N-terminus, the 476-residue chain is Bifunctional protein HldE (476 aa).

Positions 1–319 (MKVTLPAFEK…EALKSHQGES (319 aa)) are ribokinase. 195–198 (NMSE) lines the ATP pocket. Asp264 is an active-site residue. The segment at 345 to 476 (MTNGCFDILH…AIIQNIMSRH (132 aa)) is cytidylyltransferase.

The protein in the N-terminal section; belongs to the carbohydrate kinase PfkB family. It in the C-terminal section; belongs to the cytidylyltransferase family. Homodimer.

It carries out the reaction D-glycero-beta-D-manno-heptose 7-phosphate + ATP = D-glycero-beta-D-manno-heptose 1,7-bisphosphate + ADP + H(+). It catalyses the reaction D-glycero-beta-D-manno-heptose 1-phosphate + ATP + H(+) = ADP-D-glycero-beta-D-manno-heptose + diphosphate. It functions in the pathway nucleotide-sugar biosynthesis; ADP-L-glycero-beta-D-manno-heptose biosynthesis; ADP-L-glycero-beta-D-manno-heptose from D-glycero-beta-D-manno-heptose 7-phosphate: step 1/4. The protein operates within nucleotide-sugar biosynthesis; ADP-L-glycero-beta-D-manno-heptose biosynthesis; ADP-L-glycero-beta-D-manno-heptose from D-glycero-beta-D-manno-heptose 7-phosphate: step 3/4. Functionally, catalyzes the phosphorylation of D-glycero-D-manno-heptose 7-phosphate at the C-1 position to selectively form D-glycero-beta-D-manno-heptose-1,7-bisphosphate. Catalyzes the ADP transfer from ATP to D-glycero-beta-D-manno-heptose 1-phosphate, yielding ADP-D-glycero-beta-D-manno-heptose. In Shewanella amazonensis (strain ATCC BAA-1098 / SB2B), this protein is Bifunctional protein HldE.